An 85-amino-acid chain; its full sequence is Prosialokinin (85 aa).

The N-terminal stretch at 1-23 is a signal peptide; sequence MNMFITVQIVIVLVLAVLSEAAS. The propeptide occupies 24 to 74; it reads LPTATERKDAMDEGPNQSDEPEGSVADPSTKDDDYSDSLKQDEKYYKVRLL. Positions 26-61 are disordered; sequence TATERKDAMDEGPNQSDEPEGSVADPSTKDDDYSDS. Positions 52 to 61 are enriched in basic and acidic residues; sequence STKDDDYSDS. Met84 is subject to Methionine amide.

It belongs to the tachykinin family. As to expression, expressed exclusively in the medial lobe of female salivary gland. Not detected in female carcass without head and salivary glands. Not detected in male tissues.

Its subcellular location is the secreted. Vasodilatory peptide. Facilitates mosquito blood feeding on vertebrate host. Induces nitric oxide (NO) release in blood vessels through the activation of the nitric oxide synthase (NOS3). Enhances endothelial permeability and induces edema at the site of inoculation in the host. Induces host smooth muscle contraction. Down-regulates production of Th1 cytokines, such as IL2 and IFN-gamma (IFNG), in mouse splenocytes. Up-regulates production of Th2 cytokines, such as IL4 and IL10, in mouse splenocytes. Promotes recruitment of host leukocytes, especially neutrophils and CD8+ T cells, to the bite site. Modulates cytokine production by host macrophages. Modulates populations of monocytes/macrophages, plasmacytoid dendritic cells, B cells, CD4+ T cells, NK and NKT cells, shifting mammalian immunity towards Th2 responses. In terms of biological role, (Microbial infection) Promotes Semliki Forest virus infection in the host. Functionally, (Microbial infection) Does not affect Zika virus replication in the host. This is Prosialokinin from Aedes aegypti (Yellowfever mosquito).